We begin with the raw amino-acid sequence, 187 residues long: Ribosome-recycling factor (187 aa).

The protein belongs to the RRF family.

The protein resides in the cytoplasm. In terms of biological role, responsible for the release of ribosomes from messenger RNA at the termination of protein biosynthesis. May increase the efficiency of translation by recycling ribosomes from one round of translation to another. The protein is Ribosome-recycling factor of Anaeromyxobacter sp. (strain Fw109-5).